An 84-amino-acid polypeptide reads, in one-letter code: ATP synthase subunit c (84 aa).

A run of 2 helical transmembrane segments spans residues Ala-21–Ile-38 and Met-60–Leu-80.

Belongs to the ATPase C chain family. F-type ATPases have 2 components, F(1) - the catalytic core - and F(0) - the membrane proton channel. F(1) has five subunits: alpha(3), beta(3), gamma(1), delta(1), epsilon(1). F(0) has three main subunits: a(1), b(2) and c(10-14). The alpha and beta chains form an alternating ring which encloses part of the gamma chain. F(1) is attached to F(0) by a central stalk formed by the gamma and epsilon chains, while a peripheral stalk is formed by the delta and b chains.

It localises to the cell inner membrane. F(1)F(0) ATP synthase produces ATP from ADP in the presence of a proton or sodium gradient. F-type ATPases consist of two structural domains, F(1) containing the extramembraneous catalytic core and F(0) containing the membrane proton channel, linked together by a central stalk and a peripheral stalk. During catalysis, ATP synthesis in the catalytic domain of F(1) is coupled via a rotary mechanism of the central stalk subunits to proton translocation. Its function is as follows. Key component of the F(0) channel; it plays a direct role in translocation across the membrane. A homomeric c-ring of between 10-14 subunits forms the central stalk rotor element with the F(1) delta and epsilon subunits. In Phocaeicola vulgatus (strain ATCC 8482 / DSM 1447 / JCM 5826 / CCUG 4940 / NBRC 14291 / NCTC 11154) (Bacteroides vulgatus), this protein is ATP synthase subunit c.